Consider the following 344-residue polypeptide: Phosphoribosylformylglycinamidine cyclo-ligase (344 aa).

It belongs to the AIR synthase family.

It is found in the cytoplasm. It carries out the reaction 2-formamido-N(1)-(5-O-phospho-beta-D-ribosyl)acetamidine + ATP = 5-amino-1-(5-phospho-beta-D-ribosyl)imidazole + ADP + phosphate + H(+). Its pathway is purine metabolism; IMP biosynthesis via de novo pathway; 5-amino-1-(5-phospho-D-ribosyl)imidazole from N(2)-formyl-N(1)-(5-phospho-D-ribosyl)glycinamide: step 2/2. The chain is Phosphoribosylformylglycinamidine cyclo-ligase from Exiguobacterium sibiricum (strain DSM 17290 / CCUG 55495 / CIP 109462 / JCM 13490 / 255-15).